Here is a 555-residue protein sequence, read N- to C-terminus: Potassium-transporting ATPase potassium-binding subunit (555 aa).

The next 10 membrane-spanning stretches (helical) occupy residues 2 to 22, 60 to 80, 130 to 150, 173 to 193, 246 to 266, 278 to 298, 374 to 394, 412 to 432, 483 to 503, and 525 to 545; these read IWVAVVITMLLFILVAKPTGI, QYALSLVLLNGFMIVVVYFIF, IGITFLMFAAPATTLALVMAF, VFLPITFMAALVFVALGVPQT, MSNILQMMLMMLLPTALPFTY, ILFVSLFMVFLLGFITITTSE, AGFVNIIMYAIIAVFISGLMV, LIAVTILFHPLLILGFSALAL, LVMFLGRYFSLITMLAVAASL, and GIFIGTIVIVGALTFFPMLVL.

The protein belongs to the KdpA family. As to quaternary structure, the system is composed of three essential subunits: KdpA, KdpB and KdpC.

The protein localises to the cell membrane. Its function is as follows. Part of the high-affinity ATP-driven potassium transport (or Kdp) system, which catalyzes the hydrolysis of ATP coupled with the electrogenic transport of potassium into the cytoplasm. This subunit binds the extracellular potassium ions and delivers the ions to the membrane domain of KdpB through an intramembrane tunnel. This is Potassium-transporting ATPase potassium-binding subunit from Bacillus cereus (strain AH187).